Reading from the N-terminus, the 1644-residue chain is Terminal uridylyltransferase 4 (1644 aa).

Disordered regions lie at residues 30–60 (SNQTLKPRNDKSEIGTSSLNRNSSKKTKQND) and 75–277 (AASV…EMDY). A Phosphoserine modification is found at Ser102. The span at 108–123 (KGSSQTKLEKTPSLQT) shows a compositional bias: polar residues. Residue Ser131 is modified to Phosphoserine. 2 stretches are compositionally biased toward polar residues: residues 146–156 (AEATTEKALNS) and 163–174 (TPTSQMKLQKTP). Ser176 is subject to Phosphoserine. Polar residues-rich tracts occupy residues 194–209 (QTESQQTGKKLTSSFV) and 226–242 (LENSSLSQKQQTQTDNI). The span at 258-272 (DLSKMKSEESNKENS) shows a compositional bias: basic and acidic residues. A required for interaction with LIN28A and pre-let-7 RNA region spans residues 273–353 (SEMDYLENAT…KEKRHKKNIL (81 aa)). Residues Cys326, Cys329, His342, and His348 each coordinate Zn(2+). The segment covering 603 to 623 (IADENKAKADEPKDDTKKTET) has biased composition (basic and acidic residues). Residues 603-640 (IADENKAKADEPKDDTKKTETDNQSNAAKAKHGKSPLT) form a disordered region. In terms of domain architecture, PAP-associated 1 spans 649-698 (LGQLWLELLKFYTLDFALEEYVICVRIQDILTRENKNWPKRRIAIEDPFS). Disordered stretches follow at residues 733–759 (KGGNKSTMDPKKKEKGKLSSKKPVKSD) and 812–841 (HGQDSSSLSTASGGSDLKQKSAEKQGDLTP). Residues 745–755 (KEKGKLSSKKP) are compositionally biased toward basic residues. A compositionally biased stretch (low complexity) spans 815–827 (DSSSLSTASGGSD). The segment covering 828–837 (LKQKSAEKQG) has biased composition (basic and acidic residues). The segment at 918–1634 (DKFILTSGKP…CATRRCRERC (717 aa)) is sufficient for monouridylation activity. The CCHC-type 1 zinc finger occupies 930–947 (IVCSICKKDGHSKNDCPE). Residues 1015–1018 (SSKN), 1025–1028 (SDLD), Asn1098, Lys1120, 1138–1142 (SYAYI), and His1254 contribute to the UTP site. Mg(2+) contacts are provided by Asp1026 and Asp1028. The region spanning 1201–1254 (SLGELWLGLLRFYTEEFDFKEYVISIRQKKLLTTFEKQWTSKCIAIEDPFDLNH) is the PAP-associated 2 domain. The segment at 1310-1327 (RCCRVCGKIGHYMKDCPK) adopts a CCHC-type 2 zinc-finger fold. The interval 1329–1350 (KRLKKKDSEEEKEGNEEEKDSR) is disordered. Residues 1358-1375 (LRCFICGDAGHVRRECPE) form a CCHC-type 3 zinc finger. Positions 1402 to 1427 (AGSAQQQSDQSIRTRQSSECSDSPSY) are enriched in low complexity. The tract at residues 1402-1483 (AGSAQQQSDQ…LYNFPQSPPA (82 aa)) is disordered. Residues 1428–1450 (SPQPQPFPQNSPQPSALPPPPSQ) show a composition bias toward pro residues. A compositionally biased stretch (low complexity) spans 1451 to 1473 (PGSQPKLGPPQQGGQPPHQVQMP). At Arg1624 the chain carries Omega-N-methylarginine.

Belongs to the DNA polymerase type-B-like family. As to quaternary structure, interacts with LIN28A in the presence of pre-let-7 RNA. Interacts with T2BP. Interacts with MOV10; the interaction is RNA-dependent. The cofactor is Mg(2+). Requires Mn(2+) as cofactor. As to expression, ubiquitously expressed.

It localises to the nucleus. It is found in the cytoplasm. Its subcellular location is the cytoplasmic ribonucleoprotein granule. It catalyses the reaction RNA(n) + UTP = RNA(n)-3'-uridine ribonucleotide + diphosphate. Uridylyltransferase that mediates the terminal uridylation of mRNAs with short (less than 25 nucleotides) poly(A) tails, hence facilitating global mRNA decay. Essential for both oocyte maturation and fertility. Through 3' terminal uridylation of mRNA, sculpts, with TUT7, the maternal transcriptome by eliminating transcripts during oocyte growth. Involved in microRNA (miRNA)-induced gene silencing through uridylation of deadenylated miRNA targets. Also functions as an integral regulator of microRNA biogenesiS using 3 different uridylation mechanisms. Acts as a suppressor of miRNA biogenesis by mediating the terminal uridylation of some miRNA precursors, including that of let-7 (pre-let-7), miR107, miR-143 and miR-200c. Uridylated miRNAs are not processed by Dicer and undergo degradation. Degradation of pre-let-7 contributes to the maintenance of embryonic stem (ES) cell pluripotency. Also catalyzes the 3' uridylation of miR-26A, a miRNA that targets IL6 transcript. This abrogates the silencing of IL6 transcript, hence promoting cytokine expression. In the absence of LIN28A, TUT7 and TUT4 monouridylate group II pre-miRNAs, which includes most of pre-let7 members, that shapes an optimal 3' end overhang for efficient processing. Add oligo-U tails to truncated pre-miRNAS with a 5' overhang which may promote rapid degradation of non-functional pre-miRNA species. May also suppress Toll-like receptor-induced NF-kappa-B activation via binding to T2BP. Does not play a role in replication-dependent histone mRNA degradation. Due to functional redundancy between TUT4 and TUT7, the identification of the specific role of each of these proteins is difficult. TUT4 and TUT7 restrict retrotransposition of long interspersed element-1 (LINE-1) in cooperation with MOV10 counteracting the RNA chaperonne activity of L1RE1. TUT7 uridylates LINE-1 mRNAs in the cytoplasm which inhibits initiation of reverse transcription once in the nucleus, whereas uridylation by TUT4 destabilizes mRNAs in cytoplasmic ribonucleoprotein granules. The polypeptide is Terminal uridylyltransferase 4 (Mus musculus (Mouse)).